Here is a 173-residue protein sequence, read N- to C-terminus: Co-chaperone protein HscB homolog (173 aa).

The J domain maps to 5 to 77 (CHFALFELKP…PKRARYLLAM (73 aa)).

This sequence belongs to the HscB family. As to quaternary structure, interacts with HscA and stimulates its ATPase activity.

In terms of biological role, co-chaperone involved in the maturation of iron-sulfur cluster-containing proteins. Seems to help targeting proteins to be folded toward HscA. This chain is Co-chaperone protein HscB homolog, found in Pseudomonas syringae pv. tomato (strain ATCC BAA-871 / DC3000).